A 131-amino-acid polypeptide reads, in one-letter code: Profilin-2 (131 aa).

Belongs to the profilin family. As to quaternary structure, occurs in many kinds of cells as a complex with monomeric actin in a 1:1 ratio.

The protein resides in the cytoplasm. The protein localises to the cytoskeleton. In terms of biological role, binds to actin and affects the structure of the cytoskeleton. At high concentrations, profilin prevents the polymerization of actin, whereas it enhances it at low concentrations. By binding to PIP2, it inhibits the formation of IP3 and DG. The sequence is that of Profilin-2 from Lilium longiflorum (Trumpet lily).